Reading from the N-terminus, the 438-residue chain is Phosphoribosylamine--glycine ligase (438 aa).

Positions 108–316 constitute an ATP-grasp domain; it reads RTFMERNEIP…LLEVAEGIVD (209 aa). 135-194 is an ATP binding site; the sequence is VDDFGRPVVVKPIGLTGGKGVKVVGYQLRDNEEAKSYAEELIRRDGRVLIEERTNGVEFT. Positions 274, 286, and 288 each coordinate Mg(2+). The Mn(2+) site is built by Gln-274, Glu-286, and Asn-288.

It belongs to the GARS family. Mg(2+) serves as cofactor. It depends on Mn(2+) as a cofactor.

The catalysed reaction is 5-phospho-beta-D-ribosylamine + glycine + ATP = N(1)-(5-phospho-beta-D-ribosyl)glycinamide + ADP + phosphate + H(+). It participates in purine metabolism; IMP biosynthesis via de novo pathway; N(1)-(5-phospho-D-ribosyl)glycinamide from 5-phospho-alpha-D-ribose 1-diphosphate: step 2/2. The polypeptide is Phosphoribosylamine--glycine ligase (Thermococcus gammatolerans (strain DSM 15229 / JCM 11827 / EJ3)).